A 71-amino-acid polypeptide reads, in one-letter code: Large ribosomal subunit protein bL31 (71 aa).

Positions 16, 18, 37, and 40 each coordinate Zn(2+).

The protein belongs to the bacterial ribosomal protein bL31 family. Type A subfamily. Part of the 50S ribosomal subunit. Zn(2+) serves as cofactor.

Functionally, binds the 23S rRNA. The chain is Large ribosomal subunit protein bL31 from Serratia proteamaculans (strain 568).